A 355-amino-acid chain; its full sequence is Syntaxin-5 (355 aa).

Over 1-333 (MIPRKRYGSK…KYFQSVTSNR (333 aa)) the chain is Cytoplasmic. Positions 245–247 (IDM) match the IxM motif; signal for cargo packaging into COPII-coated vesicles motif. A t-SNARE coiled-coil homology domain is found at 263-325 (DSYIQSRADT…EAAHSEILKY (63 aa)). Residues 287–318 (FQQLAHMVKEQEETIQRIDENVLGAQLDVEAA) adopt a coiled-coil conformation. The chain crosses the membrane as a helical; Anchor for type IV membrane protein span at residues 334 to 354 (WLMVKIFLILIVFFIIFVVFL). A topological domain (vesicular) is located at residue A355.

This sequence belongs to the syntaxin family. In terms of assembly, part of a ternary complex containing STX5A, NSFL1C and VCP. Part of a unique SNARE complex composed of the Golgi SNAREs GOSR1, GOSR2 and YKT6. This complex also includes VTI1A. Component of a SNARE complex consisting of STX5, YKT6, GOSR1 and BET1L. Interacts with BET1L. Interacts with BET1. Interacts with COG4. Interacts with GM130/GOLGA2. Interacts (via IxM motif) with SEC24C and SEC24D; mediates STX5 packaging into COPII-coated vesicles. Interacts with VLDLR; this interaction mediates VLDLR translocation from the endoplasmic reticulum to the plasma membrane. As to expression, expressed in the brain, heart, spleen, lung, liver, kidney and testis.

It localises to the endoplasmic reticulum-Golgi intermediate compartment membrane. The protein localises to the golgi apparatus membrane. Mediates endoplasmic reticulum to Golgi transport. Together with p115/USO1 and GM130/GOLGA2, involved in vesicle tethering and fusion at the cis-Golgi membrane to maintain the stacked and inter-connected structure of the Golgi apparatus. In terms of biological role, required for Golgi to endoplasmic reticulum retrogade transport, and for intra-Golgi transport. The protein is Syntaxin-5 (Stx5) of Rattus norvegicus (Rat).